Consider the following 449-residue polypeptide: 3-phosphoshikimate 1-carboxyvinyltransferase (449 aa).

Positions methionine 1–glycine 26 are disordered. Residues lysine 28, serine 29, and arginine 33 each coordinate 3-phosphoshikimate. Lysine 28 provides a ligand contact to phosphoenolpyruvate. Positions 100 and 128 each coordinate phosphoenolpyruvate. Serine 174, glutamine 176, aspartate 327, and lysine 354 together coordinate 3-phosphoshikimate. Glutamine 176 serves as a coordination point for phosphoenolpyruvate. The active-site Proton acceptor is aspartate 327. Phosphoenolpyruvate-binding residues include arginine 358 and arginine 403.

The protein belongs to the EPSP synthase family. As to quaternary structure, monomer.

Its subcellular location is the cytoplasm. It catalyses the reaction 3-phosphoshikimate + phosphoenolpyruvate = 5-O-(1-carboxyvinyl)-3-phosphoshikimate + phosphate. It functions in the pathway metabolic intermediate biosynthesis; chorismate biosynthesis; chorismate from D-erythrose 4-phosphate and phosphoenolpyruvate: step 6/7. Catalyzes the transfer of the enolpyruvyl moiety of phosphoenolpyruvate (PEP) to the 5-hydroxyl of shikimate-3-phosphate (S3P) to produce enolpyruvyl shikimate-3-phosphate and inorganic phosphate. The sequence is that of 3-phosphoshikimate 1-carboxyvinyltransferase from Chelativorans sp. (strain BNC1).